The primary structure comprises 278 residues: Probable ribosomal RNA small subunit methyltransferase A (278 aa).

Positions 25, 27, 52, 73, 98, and 114 each coordinate S-adenosyl-L-methionine.

The protein belongs to the class I-like SAM-binding methyltransferase superfamily. rRNA adenine N(6)-methyltransferase family. RsmA subfamily.

Its subcellular location is the cytoplasm. Specifically dimethylates two adjacent adenosines in the loop of a conserved hairpin near the 3'-end of 16S rRNA in the 30S particle. May play a critical role in biogenesis of 30S subunits. This chain is Probable ribosomal RNA small subunit methyltransferase A, found in Methanopyrus kandleri (strain AV19 / DSM 6324 / JCM 9639 / NBRC 100938).